A 1025-amino-acid polypeptide reads, in one-letter code: Multidrug resistance protein MdtC (1025 aa).

A run of 12 helical transmembrane segments spans residues 3-23 (FFAL…AITL), 333-353 (EVEQ…FLFL), 360-380 (IIPA…MYLC), 387-407 (LSLM…IVVL), 431-451 (VGFT…PLLL), 463-483 (FAVT…TLTP), 528-548 (LVGV…ISIP), 853-873 (VILI…LYES), 875-895 (VHPL…LLAL), 897-917 (LFNA…IGIV), 953-973 (PIMM…LSGG), and 984-1004 (ITIV…TPVV).

Belongs to the resistance-nodulation-cell division (RND) (TC 2.A.6) family. MdtC subfamily. Part of a tripartite efflux system composed of MdtA, MdtB and MdtC. MdtC forms a heteromultimer with MdtB.

The protein localises to the cell inner membrane. Its function is as follows. The MdtABC tripartite complex confers resistance against novobiocin and deoxycholate. The chain is Multidrug resistance protein MdtC from Escherichia coli (strain UTI89 / UPEC).